A 1357-amino-acid chain; its full sequence is Major yolk protein (1357 aa).

A signal peptide spans Met1–Ala15. 2 Transferrin-like domains span residues Val132 to Tyr478 and Ala493 to Lys1101. Asn198, Asn227, Asn304, Asn310, Asn402, Asn499, Asn530, Asn541, Asn572, Asn578, Asn625, Asn639, Asn692, Asn732, Asn741, Asn1035, Asn1043, Asn1081, Asn1128, Asn1208, Asn1241, and Asn1258 each carry an N-linked (GlcNAc...) asparagine glycan.

It belongs to the transferrin family. Synthesized in the intestines of the females and males and also in ovaries and testis.

It localises to the secreted. Its function is as follows. May serve the following two functions: a classical role as a yolk protein precursor and probably shuttle iron to developing germ cells. This chain is Major yolk protein, found in Strongylocentrotus purpuratus (Purple sea urchin).